The sequence spans 331 residues: MAFTDRLLDAWYKGHPALALLRPLEGLYRRVVERKRARFLAGEGDIYRAPVPVIVVGNITVGGTGKTPLILWMIEHCRRRGLRVGVVSRGYGAKPPSLPWRVLPDQSASEAGDEPLLIVQRCGVPLMIDPDRSRAVQALLAAEPLDLILSDDGLQHYRLARDLELVLIDAARGLGNRRCLPAGPLREPVERLSSVDALLYNGAMADRGDGYAFRLKPSALINLRSGERQPVDYFPAGQALHAVAGIGNPRRFFNTLEGLHWRPVPHAFADHAVYSAEALTFTPALPLVMTEKDAVKCRAFAADDWWYLAVDAVPSDAFVGWFDQQLLRLSP.

An ATP-binding site is contributed by 60-67 (TVGGTGKT).

It belongs to the LpxK family.

The enzyme catalyses a lipid A disaccharide + ATP = a lipid IVA + ADP + H(+). Its pathway is glycolipid biosynthesis; lipid IV(A) biosynthesis; lipid IV(A) from (3R)-3-hydroxytetradecanoyl-[acyl-carrier-protein] and UDP-N-acetyl-alpha-D-glucosamine: step 6/6. In terms of biological role, transfers the gamma-phosphate of ATP to the 4'-position of a tetraacyldisaccharide 1-phosphate intermediate (termed DS-1-P) to form tetraacyldisaccharide 1,4'-bis-phosphate (lipid IVA). The sequence is that of Tetraacyldisaccharide 4'-kinase from Pseudomonas syringae pv. syringae (strain B728a).